We begin with the raw amino-acid sequence, 123 residues long: Periplasmic [Fe] hydrogenase small subunit (123 aa).

A signal peptide (tat-type signal) is located at residues 1 to 34 (MQIASITRRGFLKVACVTTGAALIGIRMTGKAVA). A disordered region spans residues 103–123 (TTAGKLPNPRASEFEGPYPYE).

As to quaternary structure, heterodimer of a large and a small subunit. In terms of processing, predicted to be exported by the Tat system. The position of the signal peptide cleavage has been experimentally proven.

It localises to the periplasm. The catalysed reaction is H2 + 2 oxidized [2Fe-2S]-[ferredoxin] = 2 reduced [2Fe-2S]-[ferredoxin] + 2 H(+). Functionally, may be involved in hydrogen uptake for the reduction of sulfate to hydrogen sulfide in an electron transport chain. Cytochrome c3 is likely to be the physiological electron carrier for the enzyme. This chain is Periplasmic [Fe] hydrogenase small subunit (hydB), found in Nitratidesulfovibrio vulgaris (strain ATCC 29579 / DSM 644 / CCUG 34227 / NCIMB 8303 / VKM B-1760 / Hildenborough) (Desulfovibrio vulgaris).